The sequence spans 160 residues: 6,7-dimethyl-8-ribityllumazine synthase (160 aa).

5-amino-6-(D-ribitylamino)uracil-binding positions include Trp-27, 59 to 61 (AIE), and 81 to 83 (VVI). 86-87 (ET) lines the (2S)-2-hydroxy-3-oxobutyl phosphate pocket. His-89 serves as the catalytic Proton donor. Position 114 (Asn-114) interacts with 5-amino-6-(D-ribitylamino)uracil. Arg-128 provides a ligand contact to (2S)-2-hydroxy-3-oxobutyl phosphate.

This sequence belongs to the DMRL synthase family. In terms of assembly, homopentamer.

The catalysed reaction is (2S)-2-hydroxy-3-oxobutyl phosphate + 5-amino-6-(D-ribitylamino)uracil = 6,7-dimethyl-8-(1-D-ribityl)lumazine + phosphate + 2 H2O + H(+). Its pathway is cofactor biosynthesis; riboflavin biosynthesis; riboflavin from 2-hydroxy-3-oxobutyl phosphate and 5-amino-6-(D-ribitylamino)uracil: step 1/2. Its function is as follows. Catalyzes the formation of 6,7-dimethyl-8-ribityllumazine by condensation of 5-amino-6-(D-ribitylamino)uracil with 3,4-dihydroxy-2-butanone 4-phosphate. This is the penultimate step in the biosynthesis of riboflavin. This chain is 6,7-dimethyl-8-ribityllumazine synthase, found in Mycobacterium ulcerans (strain Agy99).